Reading from the N-terminus, the 163-residue chain is Neurotrophin-3 (163 aa).

The N-terminal stretch at 1-3 (IQS) is a signal peptide. A propeptide spanning residues 4–119 (TSMDQGILTE…VLNRTSRRKR (116 aa)) is cleaved from the precursor. An N-linked (GlcNAc...) asparagine glycan is attached at Asn112.

It belongs to the NGF-beta family.

It is found in the secreted. Functionally, seems to promote the survival of visceral and proprioceptive sensory neurons. This chain is Neurotrophin-3 (NTF3), found in Eryx colubrinus colubrinus.